Here is a 323-residue protein sequence, read N- to C-terminus: Fructose-1,6-bisphosphatase class 1 (323 aa).

4 residues coordinate Mg(2+): E88, D107, L109, and D110. Residues D110–S113 and N200 each bind substrate. E272 is a Mg(2+) binding site.

This sequence belongs to the FBPase class 1 family. In terms of assembly, homotetramer. It depends on Mg(2+) as a cofactor.

The protein resides in the cytoplasm. The catalysed reaction is beta-D-fructose 1,6-bisphosphate + H2O = beta-D-fructose 6-phosphate + phosphate. It participates in carbohydrate biosynthesis; gluconeogenesis. The polypeptide is Fructose-1,6-bisphosphatase class 1 (Acinetobacter baumannii (strain AYE)).